The chain runs to 559 residues: AP-4 complex accessory subunit tepsin (559 aa).

One can recognise an ENTH domain in the interval 2-135 (LDRLAFLQQL…FSESIPSPSH (134 aa)). Disordered regions lie at residues 131-157 (PSPSHTVSAKERSQSGMGSQASSAPAL), 214-290 (AIPS…ESLD), and 472-491 (PNGAANQKNPNGSTEKSDPA). Low complexity-rich tracts occupy residues 144–154 (QSGMGSQASSA) and 266–281 (SRSSDVGSKSGSDGQS). A compositionally biased stretch (polar residues) spans 472–485 (PNGAANQKNPNGST).

It localises to the golgi apparatus. Its subcellular location is the trans-Golgi network membrane. It is found in the cytoplasmic vesicle. The protein resides in the cytoplasm. The protein localises to the cytosol. In terms of biological role, may play a role in vesicular trafficking of proteins at the trans-Golgi network. The polypeptide is AP-4 complex accessory subunit tepsin (Xenopus laevis (African clawed frog)).